Here is a 331-residue protein sequence, read N- to C-terminus: MRRGLLLLNLGTPDNADIRAVKLYLREFLTDKRVIDLPTIPRYILVYCLILPFRSPKSAQAYQSIWTEKGSPLLYHSQNLVTKLQSALKDEYKIALGMRYGTPSITTALAELKDCHSLTILPLFPQYSSAATGSAIEKTLSYLANQEIIPSIKIIRDFYQRPEYIQAQAKIMKPYIKDNFHVLFSYHGIPERHIHKSGCDTLCPQTCTPIYDKNQACYRAQCYQTSLLLAKELQLGTHQYTTAFQSRLGKTPWIKPYTDEIFAELISKGIKNIVVSCPSFVADCLETLEEIGIRAKEQWEKLGGEQFILTPCMNDHPEWIKAIHSIVNEQI.

His-187 and Glu-286 together coordinate Fe cation.

This sequence belongs to the ferrochelatase family.

The protein resides in the cytoplasm. It catalyses the reaction heme b + 2 H(+) = protoporphyrin IX + Fe(2+). It participates in porphyrin-containing compound metabolism; protoheme biosynthesis; protoheme from protoporphyrin-IX: step 1/1. Catalyzes the ferrous insertion into protoporphyrin IX. This is Ferrochelatase from Legionella pneumophila (strain Corby).